The primary structure comprises 225 residues: NAD(P)H-quinone oxidoreductase subunit K, chloroplastic (225 aa).

Positions 43, 44, 108, and 139 each coordinate [4Fe-4S] cluster.

The protein belongs to the complex I 20 kDa subunit family. In terms of assembly, NDH is composed of at least 16 different subunits, 5 of which are encoded in the nucleus. The cofactor is [4Fe-4S] cluster.

It is found in the plastid. The protein resides in the chloroplast thylakoid membrane. It catalyses the reaction a plastoquinone + NADH + (n+1) H(+)(in) = a plastoquinol + NAD(+) + n H(+)(out). The enzyme catalyses a plastoquinone + NADPH + (n+1) H(+)(in) = a plastoquinol + NADP(+) + n H(+)(out). NDH shuttles electrons from NAD(P)H:plastoquinone, via FMN and iron-sulfur (Fe-S) centers, to quinones in the photosynthetic chain and possibly in a chloroplast respiratory chain. The immediate electron acceptor for the enzyme in this species is believed to be plastoquinone. Couples the redox reaction to proton translocation, and thus conserves the redox energy in a proton gradient. This Nandina domestica (Heavenly bamboo) protein is NAD(P)H-quinone oxidoreductase subunit K, chloroplastic.